The primary structure comprises 241 residues: Peptidoglycan endopeptidase RipB (241 aa).

The N-terminal stretch at 1 to 31 (MRHTRFHPIKLAWITAVVAGLMVGVATPADA) is a signal peptide. The NlpC/P60 domain maps to 109–241 (RQAVEYVIRR…TPFVTRIIEY (133 aa)). Cysteine 152 acts as the Nucleophile in catalysis. The Proton acceptor role is filled by histidine 201. The active site involves glutamate 213.

This sequence belongs to the peptidase C40 family. As to quaternary structure, monomer.

In terms of biological role, peptidoglycan endopeptidase that cleaves the bond between D-glutamate and meso-diaminopimelate. Binds high-molecular weight peptidoglycan, but does not degrade it. Required for normal separation of daughter cells after cell division and cell wall integrity. Required for host cell invasion. In Mycobacterium tuberculosis (strain CDC 1551 / Oshkosh), this protein is Peptidoglycan endopeptidase RipB (ripB).